We begin with the raw amino-acid sequence, 906 residues long: Protein translocase subunit SecA (906 aa).

ATP is bound by residues Gln-87, Gly-105 to Thr-109, and Asp-507. Zn(2+) contacts are provided by Cys-890, Cys-892, Cys-901, and His-902.

Belongs to the SecA family. In terms of assembly, monomer and homodimer. Part of the essential Sec protein translocation apparatus which comprises SecA, SecYEG and auxiliary proteins SecDF-YajC and YidC. The cofactor is Zn(2+).

It localises to the cell inner membrane. The protein resides in the cytoplasm. The catalysed reaction is ATP + H2O + cellular proteinSide 1 = ADP + phosphate + cellular proteinSide 2.. Part of the Sec protein translocase complex. Interacts with the SecYEG preprotein conducting channel. Has a central role in coupling the hydrolysis of ATP to the transfer of proteins into and across the cell membrane, serving both as a receptor for the preprotein-SecB complex and as an ATP-driven molecular motor driving the stepwise translocation of polypeptide chains across the membrane. This is Protein translocase subunit SecA from Thiobacillus denitrificans (strain ATCC 25259 / T1).